Consider the following 345-residue polypeptide: N-acetyl-gamma-glutamyl-phosphate reductase (345 aa).

Residue cysteine 149 is part of the active site.

Belongs to the NAGSA dehydrogenase family. Type 1 subfamily.

It is found in the cytoplasm. It carries out the reaction N-acetyl-L-glutamate 5-semialdehyde + phosphate + NADP(+) = N-acetyl-L-glutamyl 5-phosphate + NADPH + H(+). It functions in the pathway amino-acid biosynthesis; L-arginine biosynthesis; N(2)-acetyl-L-ornithine from L-glutamate: step 3/4. Catalyzes the NADPH-dependent reduction of N-acetyl-5-glutamyl phosphate to yield N-acetyl-L-glutamate 5-semialdehyde. The protein is N-acetyl-gamma-glutamyl-phosphate reductase of Geobacillus sp. (strain WCH70).